A 163-amino-acid chain; its full sequence is Auxin-responsive protein IAA5 (163 aa).

An EAR-like (transcriptional repression) motif is present at residues 15–19 (LRLGL). The 87-residue stretch at 74–160 (SSYVKVSVDG…KRLRIMKRSC (87 aa)) folds into the PB1 domain.

Belongs to the Aux/IAA family. In terms of assembly, homodimers and heterodimers. In terms of tissue distribution, highly expressed in stems and flowers.

Its subcellular location is the nucleus. In terms of biological role, aux/IAA proteins are short-lived transcriptional factors that function as repressors of early auxin response genes at low auxin concentrations. Repression is thought to result from the interaction with auxin response factors (ARFs), proteins that bind to the auxin-responsive promoter element (AuxRE). Formation of heterodimers with ARF proteins may alter their ability to modulate early auxin response genes expression. The polypeptide is Auxin-responsive protein IAA5 (IAA5) (Arabidopsis thaliana (Mouse-ear cress)).